The chain runs to 397 residues: Tryptophan synthase beta chain (397 aa).

N6-(pyridoxal phosphate)lysine is present on K88.

This sequence belongs to the TrpB family. Tetramer of two alpha and two beta chains. It depends on pyridoxal 5'-phosphate as a cofactor.

It carries out the reaction (1S,2R)-1-C-(indol-3-yl)glycerol 3-phosphate + L-serine = D-glyceraldehyde 3-phosphate + L-tryptophan + H2O. Its pathway is amino-acid biosynthesis; L-tryptophan biosynthesis; L-tryptophan from chorismate: step 5/5. In terms of biological role, the beta subunit is responsible for the synthesis of L-tryptophan from indole and L-serine. The polypeptide is Tryptophan synthase beta chain (Shewanella amazonensis (strain ATCC BAA-1098 / SB2B)).